A 970-amino-acid polypeptide reads, in one-letter code: Sodium/calcium exchanger 1 (970 aa).

Positions 1-32 (MLRLSLPPNVSMGFRLVALVALLFSHVDHITA) are cleaved as a signal peptide. At 33–71 (DTEAETGGNETTECTGSYYCKKGVILPIWEPQDPSFGDK) the chain is on the extracellular side. N-linked (GlcNAc...) asparagine glycosylation occurs at N41. Residues 72-92 (IARATVYFVAMVYMFLGVSII) form a helical membrane-spanning segment. The Cytoplasmic portion of the chain corresponds to 93-133 (ADRFMSSIEVITSQEKEITIKKPNGETTKTTVRIWNETVSN). A helical transmembrane segment spans residues 134–154 (LTLMALGSSAPEILLSVIEVC). Residues 138 to 178 (ALGSSAPEILLSVIEVCGHNFTAGDLGPSTIVGSAAFNMFI) form an Alpha-1 repeat. Over 155–167 (GHNFTAGDLGPST) the chain is Extracellular. N157 is a glycosylation site (N-linked (GlcNAc...) asparagine). Residues 168-188 (IVGSAAFNMFIIIALCVYVVP) form a helical membrane-spanning segment. The Cytoplasmic segment spans residues 189-201 (DGETRKIKHLRVF). A helical transmembrane segment spans residues 202 to 222 (FVTAAWSIFAYTWLYIILSVS). At 223–228 (SPGVVE) the chain is on the extracellular side. Residues 229–249 (VWEGLLTFFFFPICVVFAWVA) form a helical membrane-spanning segment. The Cytoplasmic segment spans residues 250–797 (DRRLLFYKYV…FVPPTEYWNG (548 aa)). Residues 251-270 (RRLLFYKYVYKRYRAGKQRG) are putative calmodulin-binding region. S282 and S389 each carry phosphoserine. 2 Calx-beta domains span residues 393-493 (VNME…VHLS) and 524-624 (ATIT…IEIG). Ca(2+)-binding residues include E417, D453, D478, D479, I481, E483, E486, D530, D531, D532, E548, D584, D610, E611, E612, and E715. Residues 798–818 (WACFIVSILMIGLLTAFIGDL) form a helical membrane-spanning segment. The Extracellular portion of the chain corresponds to 819–821 (ASH). A helical transmembrane segment spans residues 822 to 842 (FGCTIGLKDSVTAVVFVALGT). The stretch at 839–875 (ALGTSVPDTFASKVAATQDQYADASIGNVTGSNAVNV) is one Alpha-2 repeat. The Cytoplasmic portion of the chain corresponds to 843 to 871 (SVPDTFASKVAATQDQYADASIGNVTGSN). Residues 872–892 (AVNVFLGIGVAWSIAAIYHAA) form a helical membrane-spanning segment. Residues 893 to 903 (NGEQFKVSPGT) lie on the Extracellular side of the membrane. Residues 904 to 924 (LAFSVTLFTIFAFINVGVLLY) traverse the membrane as a helical segment. Residues 925–941 (RRRPEIGGELGGPRTAK) are Cytoplasmic-facing. A helical membrane pass occupies residues 942–962 (LLTSSLFVLLWLLYIFFSSLE). The Extracellular segment spans residues 963 to 970 (AYCHIKGF).

This sequence belongs to the Ca(2+):cation antiporter (CaCA) (TC 2.A.19) family. SLC8 subfamily. In terms of tissue distribution, detected in heart, kidney and brain (at protein level).

The protein resides in the cell membrane. It catalyses the reaction Ca(2+)(in) + 3 Na(+)(out) = Ca(2+)(out) + 3 Na(+)(in). Activated by micromolar levels of Ca(2+). Functionally, mediates the exchange of one Ca(2+) ion against three to four Na(+) ions across the cell membrane, and thereby contributes to the regulation of cytoplasmic Ca(2+) levels and Ca(2+)-dependent cellular processes. Contributes to Ca(2+) transport during excitation-contraction coupling in muscle. In a first phase, voltage-gated channels mediate the rapid increase of cytoplasmic Ca(2+) levels due to release of Ca(2+) stores from the endoplasmic reticulum. SLC8A1 mediates the export of Ca(2+) from the cell during the next phase, so that cytoplasmic Ca(2+) levels rapidly return to baseline. Required for normal embryonic heart development and the onset of heart contractions. This Mus musculus (Mouse) protein is Sodium/calcium exchanger 1 (Slc8a1).